The chain runs to 245 residues: Myozenin-3 (245 aa).

Residue S31 is modified to Phosphoserine. The tract at residues 50 to 67 is binding to ACTN2, PPP3CA and TCAP; it reads LLFQKRQRRVQKFTFELS. The binding to FLNC stretch occupies residues 67-108; that stretch reads SESLQAILASSARGKVAGRAAQATVPNGLEEQNHHSETHVFQ. The segment at 93 to 134 is disordered; it reads NGLEEQNHHSETHVFQGSPGDPGITHLGAAGTGSVRSPSALA. The segment at 180-201 is binding to ACTN2; it reads PIPRDYRNFNKTPVPFGGPHVR.

Belongs to the myozenin family. In terms of assembly, interacts with ACTN2, LDB3, FLNC, PPP3CA and TCAP. Expressed specifically in skeletal muscle and is enriched in fast-twitch muscle fibers. Not detected in heart.

It is found in the cytoplasm. The protein resides in the myofibril. Its subcellular location is the sarcomere. It localises to the z line. In terms of biological role, myozenins may serve as intracellular binding proteins involved in linking Z line proteins such as alpha-actinin, gamma-filamin, TCAP/telethonin, LDB3/ZASP and localizing calcineurin signaling to the sarcomere. Plays an important role in the modulation of calcineurin signaling. May play a role in myofibrillogenesis. The sequence is that of Myozenin-3 from Mus musculus (Mouse).